We begin with the raw amino-acid sequence, 298 residues long: Myozenin-1 (298 aa).

The segment at M1–L34 is disordered. Position 82 is a phosphoserine (S82). The segment at F105–E173 is disordered. The span at G118–Q129 shows a compositional bias: low complexity. Residues S136–G172 are compositionally biased toward gly residues.

This sequence belongs to the myozenin family. As to quaternary structure, interacts with ACTN2, ACTN3, FLNA, FLNB, FLNC, LDB3, PPP3CA and TCAP. Interacts via its C-terminal region with MYOT.

The protein resides in the nucleus. It is found in the cell projection. The protein localises to the pseudopodium. In terms of biological role, myozenins may serve as intracellular binding proteins involved in linking Z-disk proteins such as alpha-actinin, gamma-filamin, TCAP/telethonin, LDB3/ZASP and localizing calcineurin signaling to the sarcomere. Plays an important role in the modulation of calcineurin signaling. May play a role in myofibrillogenesis. The protein is Myozenin-1 (MYOZ1) of Sus scrofa (Pig).